A 231-amino-acid chain; its full sequence is NADH-ubiquinone oxidoreductase chain 4 (231 aa).

Transmembrane regions (helical) follow at residues 1–21, 34–54, 61–80, 84–106, 118–138, and 156–178; these read PIAG…YGII, TFLP…LTCL, SLIA…AIII, WGLS…LFCL, ILIL…WWLL, and LLIM…LSML.

The protein belongs to the complex I subunit 4 family.

Its subcellular location is the mitochondrion membrane. It catalyses the reaction a ubiquinone + NADH + 5 H(+)(in) = a ubiquinol + NAD(+) + 4 H(+)(out). Functionally, core subunit of the mitochondrial membrane respiratory chain NADH dehydrogenase (Complex I) that is believed to belong to the minimal assembly required for catalysis. Complex I functions in the transfer of electrons from NADH to the respiratory chain. The immediate electron acceptor for the enzyme is believed to be ubiquinone. This is NADH-ubiquinone oxidoreductase chain 4 (MT-ND4) from Trimeresurus albolabris (White-lipped pit viper).